Reading from the N-terminus, the 701-residue chain is Polyribonucleotide nucleotidyltransferase (701 aa).

The Mg(2+) site is built by Asp487 and Asp493. Positions Pro554–Val613 constitute a KH domain. One can recognise an S1 motif domain in the interval Gly623–Lys691.

Belongs to the polyribonucleotide nucleotidyltransferase family. Component of the RNA degradosome, which is a multiprotein complex involved in RNA processing and mRNA degradation. The cofactor is Mg(2+).

It localises to the cytoplasm. It carries out the reaction RNA(n+1) + phosphate = RNA(n) + a ribonucleoside 5'-diphosphate. Functionally, involved in mRNA degradation. Catalyzes the phosphorolysis of single-stranded polyribonucleotides processively in the 3'- to 5'-direction. The polypeptide is Polyribonucleotide nucleotidyltransferase (Pseudomonas aeruginosa (strain LESB58)).